A 470-amino-acid polypeptide reads, in one-letter code: Uronate isomerase (470 aa).

It belongs to the metallo-dependent hydrolases superfamily. Uronate isomerase family.

The catalysed reaction is D-glucuronate = D-fructuronate. The enzyme catalyses aldehydo-D-galacturonate = keto-D-tagaturonate. It participates in carbohydrate metabolism; pentose and glucuronate interconversion. This is Uronate isomerase from Sphingopyxis alaskensis (strain DSM 13593 / LMG 18877 / RB2256) (Sphingomonas alaskensis).